The following is a 436-amino-acid chain: MEQPFTVNSLKKLAAMPDHTDVSLSPEERVRALSKLGCNISINEDITPRRYFRSGVEMERMASVYLEEGNLENAFVLYNKFITLFVEKLPSHRDYQQCAVPEKQDIMKKLKEIAFPRTDELKTDLLRKYNIEYQEYLQSKNKYKAEILKKLEHQRLIEAERQRIAQMRQQQLESEQFLFFEDQLKKQELARGQIRGQDSPVLSEQTDGSALSCFSTHQSNSLRNAFADHPHKSDGSNFANYSPPVNRALKPAATLSAVQNLVVEGLRCVVLSRDLCHKFLLLADSNTVRGIETCGILCGKLTHNEFTITHVVVPKQSAGPDYCDVENVEELFNVQDQHGLLTLGWIHTHPTQTAFLSSVDLHTHCSYQLMLPEAIAIVCSPKHKDTGIFRLTNAGMLEVSTCKKKGFHPHTKDPKLFSICSHVLVKDIKTTVLDLR.

Met-1 is subject to N-acetylmethionine. Ser-25 and Ser-242 each carry phosphoserine. Positions 269–397 constitute an MPN domain; it reads VVLSRDLCHK…IFRLTNAGML (129 aa). Zn(2+)-binding residues include His-347, His-349, Asp-360, His-362, Cys-402, His-408, and His-410. Positions 347 to 360 match the JAMM motif motif; that stretch reads HTHPTQTAFLSSVD.

The protein belongs to the peptidase M67C family. Zn(2+) is required as a cofactor. As to expression, ubiquitously expressed. Isoform 1 is widely expressed while isoform 2 is testis-specific.

In terms of biological role, zinc metalloprotease that specifically cleaves 'Lys-63'-linked polyubiquitin chains. Acts as a positive regulator of the TORC1 signaling pathway by mediating 'Lys-63'-linked deubiquitination of SESN2, thereby inhibiting SESN2-interaction with the GATOR2 complex. Does not cleave 'Lys-48'-linked polyubiquitin chains. This Mus musculus (Mouse) protein is AMSH-like protease (Stambpl1).